Consider the following 374-residue polypeptide: F-box/LRR-repeat protein 8 (374 aa).

An F-box domain is found at 2–48 (GELVDNLPEEVLALIFRDLPLRDLAVATRVCRAWAAAAANSTVWSDK).

Directly interacts with SKP1 and CUL1. As to expression, widely expressed during embryogenesis and in adult tissues.

Substrate-recognition component of the SCF (SKP1-CUL1-F-box protein)-type E3 ubiquitin ligase complex. In Mus musculus (Mouse), this protein is F-box/LRR-repeat protein 8 (Fbxl8).